The following is an 87-amino-acid chain: U3-theraphotoxin-Hhn1a 8 (87 aa).

Residues 1–24 (MVNMKASMFLTFAGLVLLFVVCYA) form the signal peptide. Positions 25-52 (SGSEEKEFPKEMLSSIFAVDNDFKQEER) are excised as a propeptide. 3 disulfides stabilise this stretch: C54-C67, C61-C72, and C66-C79.

Belongs to the neurotoxin 10 (Hwtx-1) family. 51 (Hntx-8) subfamily. Hntx-8 sub-subfamily. As to expression, expressed by the venom gland.

It is found in the secreted. Ion channel inhibitor. The polypeptide is U3-theraphotoxin-Hhn1a 8 (Cyriopagopus hainanus (Chinese bird spider)).